Here is a 165-residue protein sequence, read N- to C-terminus: Large ribosomal subunit protein uL11 (165 aa).

The protein belongs to the universal ribosomal protein uL11 family. Part of the ribosomal stalk of the 50S ribosomal subunit. Interacts with L10 and the large rRNA to form the base of the stalk. L10 forms an elongated spine to which L12 dimers bind in a sequential fashion forming a multimeric L10(L12)X complex.

Its function is as follows. Forms part of the ribosomal stalk which helps the ribosome interact with GTP-bound translation factors. This is Large ribosomal subunit protein uL11 from Thermococcus kodakarensis (strain ATCC BAA-918 / JCM 12380 / KOD1) (Pyrococcus kodakaraensis (strain KOD1)).